We begin with the raw amino-acid sequence, 133 residues long: Large ribosomal subunit protein bL17 (133 aa).

The protein belongs to the bacterial ribosomal protein bL17 family. In terms of assembly, part of the 50S ribosomal subunit. Contacts protein L32.

This is Large ribosomal subunit protein bL17 from Idiomarina loihiensis (strain ATCC BAA-735 / DSM 15497 / L2-TR).